Reading from the N-terminus, the 189-residue chain is Large ribosomal subunit protein bL9 (189 aa).

Belongs to the bacterial ribosomal protein bL9 family.

In terms of biological role, binds to the 23S rRNA. In Cereibacter sphaeroides (strain KD131 / KCTC 12085) (Rhodobacter sphaeroides), this protein is Large ribosomal subunit protein bL9.